We begin with the raw amino-acid sequence, 197 residues long: Potassium-transporting ATPase KdpC subunit (197 aa).

A helical transmembrane segment spans residues 9–29 (LVVTLLLAALLCGAYPVLVTG).

It belongs to the KdpC family. As to quaternary structure, the system is composed of three essential subunits: KdpA, KdpB and KdpC.

It localises to the cell inner membrane. In terms of biological role, part of the high-affinity ATP-driven potassium transport (or Kdp) system, which catalyzes the hydrolysis of ATP coupled with the electrogenic transport of potassium into the cytoplasm. This subunit acts as a catalytic chaperone that increases the ATP-binding affinity of the ATP-hydrolyzing subunit KdpB by the formation of a transient KdpB/KdpC/ATP ternary complex. This is Potassium-transporting ATPase KdpC subunit from Nitratidesulfovibrio vulgaris (strain DSM 19637 / Miyazaki F) (Desulfovibrio vulgaris).